The following is a 1460-amino-acid chain: Venom prothrombin activator omicarin-C non-catalytic subunit (1460 aa).

Residues 1–30 (MGRYSVSPVPKCLLLMFLGWSGLKYYQVNA) form the signal peptide. Plastocyanin-like domains lie at 32 to 196 (QLRE…LLIC), 206 to 330 (AQKF…LNIK), 351 to 529 (MNWE…LLVC), and 539 to 685 (VQNK…FLDA). F5/8 type A domains are found at residues 32-330 (QLRE…LNIK) and 350-685 (IMNW…FLDA). The Ca(2+) site is built by K124, E139, D142, and D143. N156 carries an N-linked (GlcNAc...) asparagine glycan. Cysteines 170 and 196 form a disulfide. 5 N-linked (GlcNAc...) asparagine glycosylation sites follow: N242, N300, N385, N406, and N471. A disulfide bridge connects residues C251 and C332. C503 and C529 form a disulfide bridge. The N-linked (GlcNAc...) asparagine glycan is linked to N557. 4 disulfides stabilise this stretch: C672–C1031, C965–C991, C1147–C1298, and C1303–C1457. Positions 693-817 (GNEEEEEDDG…SDDIAGRYLR (125 aa)) are b. Residues 740-760 (LLDDEDNPEQSRSEQTEDDEE) form a disordered region. Residues 772–817 (SFKGSVAEEELKHTALALEEDAHASDPRIDSNSARNSDDIAGRYLR) constitute a propeptide, activation peptide (connecting region). 2 Plastocyanin-like domains span residues 823–991 (NKRR…ILIC) and 1000–1143 (NRTI…FTVI). The F5/8 type A 3 domain occupies 823-1143 (NKRRYYIAAE…RGMQALFTVI (321 aa)). Residues K919, F934, D937, and D938 each contribute to the Ca(2+) site. An N-linked (GlcNAc...) asparagine glycan is attached at N943. N1000, N1180, and N1397 each carry an N-linked (GlcNAc...) asparagine glycan. F5/8 type C domains follow at residues 1147-1298 (CKLP…LLGC) and 1303-1457 (CSVP…LFGC).

It belongs to the multicopper oxidase family. Heterodimer of a light and a heavy chains; non-disulfide-linked. The interaction between the two chains is calcium-dependent. Found in its active form associated with omicarin-C catalytic subunit (AC Q58L95). Post-translationally, in physiological conditions, blood coagulation factor V and factor Va are inactivated by activated protein C (APC) through proteolytic degradation of the heavy chain. However, omicarin-C non-catalytic subunit (factor V-like protein) retains its full activity even at high concentration of APC. This has two explanations: this protein has only one of the three cleavage sites present in factor V that are targeted by the APC for inactivation, and the binding with the catalytic subunit protect the cleavage site from inactivation. As to expression, expressed by the venom gland.

The protein resides in the secreted. Snake prothrombin activator that attacks the hemostatic system of prey. This non-catalytic subunit is functionally similar to blood coagulation factor V. It serves as a critical cofactor for the prothrombinase activity of the catalytic subunit, which is similar to the blood coagulation factor X. The complex converts prothrombin to thrombin by sequential cleavage at two positions, Arg-320 followed by Arg-271. Cleavage at Arg-320 produces an active intermediate known as meizothrombin. Meizothrombin is the 'second' substrate for prothrombinase, and it docks in an altered manner to present the second cleavage site (271). Cleavage at Arg-271 releases active thrombin from its pro-fragment. This order of events is reversed if the protease component of prothrombinase is used on its own, suggesting that the 271 site is inherently more accessible to proteolysis. The protein is Venom prothrombin activator omicarin-C non-catalytic subunit of Oxyuranus microlepidotus (Inland taipan).